Reading from the N-terminus, the 223-residue chain is Sigma non-opioid intracellular receptor 1 (223 aa).

The Lumenal portion of the chain corresponds to 1–7; that stretch reads MAVLSSR. Residues 8–29 traverse the membrane as a helical segment; sequence AMRAALGLAVLAVVIQLLRTWL. Residues 30–223 lie on the Cytoplasmic side of the membrane; that stretch reads SSKSYLFNQK…HTYLSELGLS (194 aa). An important for ligand-binding region spans residues 98–105; it reads SLTEYILL. The interval 176–223 is C-terminal hydrophobic region; that stretch reads FIPSTMGFALADTIFSTQDFCTLFYTFRIYARCLLLETHTYLSELGLS.

It belongs to the ERG2 family. As to quaternary structure, homotrimer.

It localises to the nucleus inner membrane. The protein resides in the nucleus outer membrane. The protein localises to the nucleus envelope. Its subcellular location is the cytoplasmic vesicle. It is found in the endoplasmic reticulum membrane. It localises to the membrane. Its function is as follows. May function in lipid transport from the endoplasmic reticulum and be involved in a wide array of cellular functions probably through regulation of the biogenesis of lipid microdomains at the plasma membrane. May regulate calcium efflux at the endoplasmic reticulum. In Taricha granulosa (Roughskin newt), this protein is Sigma non-opioid intracellular receptor 1 (SIGMAR1).